A 76-amino-acid chain; its full sequence is DNA-directed RNA polymerase subunit omega (76 aa).

The protein belongs to the RNA polymerase subunit omega family. The RNAP catalytic core consists of 2 alpha, 1 beta, 1 beta' and 1 omega subunit. When a sigma factor is associated with the core the holoenzyme is formed, which can initiate transcription.

The enzyme catalyses RNA(n) + a ribonucleoside 5'-triphosphate = RNA(n+1) + diphosphate. Its function is as follows. Promotes RNA polymerase assembly. Latches the N- and C-terminal regions of the beta' subunit thereby facilitating its interaction with the beta and alpha subunits. The chain is DNA-directed RNA polymerase subunit omega from Staphylococcus carnosus (strain TM300).